Here is a 270-residue protein sequence, read N- to C-terminus: MARKVFYISDGTAITAEVFGHAVLSQFPMEFEAITIPFVETNAKAEAVKKQINDSFITTGERPLVFHSIVKPEIRDVIYSSEGLDYDFLNTFVAPLEQQLGVSAAPVLHRTHGKANHSYEARIDAINFAMENDDGQTLKHMDKADIILLGVSRCGKTPSSLYLSMQFGIKAANYPFTEDDMDSLKLPEALKRNKHKLFGLTIDPVRLQEIRQSRMENSRYSSLRQCRMEVKEVEMMFKKERIPYIDTTNHSVEEIATKILDMTGMERHMF.

150–157 contacts ADP; it reads GVSRCGKT.

The protein belongs to the pyruvate, phosphate/water dikinase regulatory protein family. PSRP subfamily.

It catalyses the reaction [pyruvate, water dikinase] + ADP = [pyruvate, water dikinase]-phosphate + AMP + H(+). The catalysed reaction is [pyruvate, water dikinase]-phosphate + phosphate + H(+) = [pyruvate, water dikinase] + diphosphate. In terms of biological role, bifunctional serine/threonine kinase and phosphorylase involved in the regulation of the phosphoenolpyruvate synthase (PEPS) by catalyzing its phosphorylation/dephosphorylation. The sequence is that of Putative phosphoenolpyruvate synthase regulatory protein from Shewanella amazonensis (strain ATCC BAA-1098 / SB2B).